Reading from the N-terminus, the 493-residue chain is Cardiolipin synthase 1 (493 aa).

Transmembrane regions (helical) follow at residues 13–33 (FTIILAIGFIINLVLAFIIIF) and 45–65 (WAWLFVLFVLPLIGFILYLFF). PLD phosphodiesterase domains are found at residues 228–255 (MNNRNHRKIIVIDGQLGYVGGFNIGDEY) and 406–433 (ENGFIHSKMCLIDDEIVSVGTANMDFRS). Residues His-233, Lys-235, Asp-240, His-411, Lys-413, and Asp-418 contribute to the active site.

It belongs to the phospholipase D family. Cardiolipin synthase subfamily.

It is found in the cell membrane. It catalyses the reaction 2 a 1,2-diacyl-sn-glycero-3-phospho-(1'-sn-glycerol) = a cardiolipin + glycerol. Functionally, catalyzes the reversible phosphatidyl group transfer from one phosphatidylglycerol molecule to another to form cardiolipin (CL) (diphosphatidylglycerol) and glycerol. This chain is Cardiolipin synthase 1 (cls1), found in Staphylococcus aureus (strain COL).